We begin with the raw amino-acid sequence, 450 residues long: Na(+)/H(+) antiporter NhaA 1 (450 aa).

The next 11 membrane-spanning stretches (helical) occupy residues 35 to 55 (SSLF…SDYA), 79 to 99 (LKHI…GLEI), 117 to 137 (LIIC…GFNW), 143 to 163 (IGWG…LTMV), 173 to 193 (AFIV…IAIF), 198 to 218 (ISLM…VANY), 224 to 244 (PLFY…SGVH), 320 to 340 (LPVV…VVIN), 356 to 376 (IISG…WFAL), 392 to 412 (VIGA…IATL), and 423 to 443 (VAKT…LLYL).

This sequence belongs to the NhaA Na(+)/H(+) (TC 2.A.33) antiporter family.

Its subcellular location is the cell inner membrane. It carries out the reaction Na(+)(in) + 2 H(+)(out) = Na(+)(out) + 2 H(+)(in). Na(+)/H(+) antiporter that extrudes sodium in exchange for external protons. This chain is Na(+)/H(+) antiporter NhaA 1, found in Shewanella denitrificans (strain OS217 / ATCC BAA-1090 / DSM 15013).